The chain runs to 423 residues: 5-hydroxytryptamine receptor 1A (423 aa).

A disordered region spans residues 1-20 (MEGLSPGQGNNTTSSEGPFG). Topologically, residues 1–38 (MEGLSPGQGNNTTSSEGPFGTRGNATGISDVTFSYQVI) are extracellular. Polar residues predominate over residues 7-16 (GQGNNTTSSE). N-linked (GlcNAc...) asparagine glycosylation is found at N10, N11, and N24. Residues 39–59 (TSLLLGTLIFCAVLGNACVVA) traverse the membrane as a helical segment. Residues 60–73 (AIALERSLQNVANY) are Cytoplasmic-facing. The helical transmembrane segment at 74-98 (LIGSLAVTDLMVSVLVLPMAALYQV) threads the bilayer. Residues 99-107 (LNKWTLGQV) lie on the Extracellular side of the membrane. Residues 108 to 132 (TCDLFIALDVLCCTSSILHLCAIAL) form a helical membrane-spanning segment. A disulfide bridge links C109 with C187. Residues D116 and C120 each contribute to the serotonin site. Positions 133-135 (DRY) match the DRY motif; important for ligand-induced conformation changes motif. At 133–152 (DRYWAITDPIDYVNKRTPRR) the chain is on the cytoplasmic side. A helical transmembrane segment spans residues 153–174 (AAALISLTWLIGFLISIPPMLG). Residues 175–193 (WRTPEDRSDPDACTISKDH) are Extracellular-facing. The helical transmembrane segment at 194 to 216 (GYTIYSTFGAFYIPLLLMLVLYG) threads the bilayer. At 217–346 (RIFRAARFRI…LARERKTVKT (130 aa)) the chain is on the cytoplasmic side. The tract at residues 235–277 (RKGADARSGVSPAPQPRKSVNGEPGGREWRQGPGSKAGGPLCT) is disordered. The 1D-myo-inositol 4-phosphate site is built by K345, T346, and G352. A helical transmembrane segment spans residues 347 to 370 (LGIIMGTFILCWLPFFIVALVLPF). Residues 371 to 378 (CESSCHMP) lie on the Extracellular side of the membrane. Residues 379 to 403 (TLLGAIINWLGYSNSLLNPVIYAYF) traverse the membrane as a helical segment. The NPxxY motif; important for ligand-induced conformation changes and signaling signature appears at 396–400 (NPVIY). 1D-myo-inositol 4-phosphate contacts are provided by F403, N404, and K405. Topologically, residues 404 to 423 (NKDFQNAFKKIVRCKFCRRR) are cytoplasmic.

It belongs to the G-protein coupled receptor 1 family. 5-hydroxytryptamine receptor subfamily. HTR1A sub-subfamily. Heterodimer; heterodimerizes with GPER1. Interacts with YIF1B. Interacts with GPR39 and GALR1.

The protein localises to the cell membrane. It is found in the cell projection. The protein resides in the dendrite. G-protein coupled receptor activity is regulated by lipids: phosphatidylinositol 4-phosphate increases HTR1A-mediated activity. In terms of biological role, G-protein coupled receptor for 5-hydroxytryptamine (serotonin). Also functions as a receptor for various drugs and psychoactive substances. Ligand binding causes a conformation change that triggers signaling via guanine nucleotide-binding proteins (G proteins) and modulates the activity of downstream effectors, such as adenylate cyclase. HTR1A is coupled to G(i)/G(o) G alpha proteins and mediates inhibitory neurotransmission: signaling inhibits adenylate cyclase activity and activates a phosphatidylinositol-calcium second messenger system that regulates the release of Ca(2+) ions from intracellular stores. Beta-arrestin family members regulate signaling by mediating both receptor desensitization and resensitization processes. The sequence is that of 5-hydroxytryptamine receptor 1A (HTR1A) from Vulpes vulpes (Red fox).